The chain runs to 622 residues: Probable potassium transport system protein Kup (622 aa).

The next 12 membrane-spanning stretches (helical) occupy residues 8 to 28 (LAALTLGAIGVVYGDIGTSVL), 50 to 70 (ILSIFFWTLTVIVSLKYVVLV), 103 to 123 (LAVGIFGTSLFYGDGVITPAI), 137 to 157 (PHFKKYVIPITLVVLFCLFAV), 168 to 188 (FFGPITLVWFASIALLGLAHI), 203 to 223 (ALGFMFANPGTSFIILGAVVL), 247 to 267 (WFGVAMPALTLNYFGQGALLL), 285 to 305 (ALIPLVVLATMATVIASQALI), 337 to 357 (IYMPLVNWGLFVAIVLAVVMF), 366 to 386 (AYGIAVTLDMLITTTLTFFVI), 393 to 413 (PLALCVAATGCFAVVDLAFFA), and 419 to 439 (LFQGGWFPLMIGGIVFALMMT).

The protein belongs to the HAK/KUP transporter (TC 2.A.72) family.

It is found in the cell inner membrane. The enzyme catalyses K(+)(in) + H(+)(in) = K(+)(out) + H(+)(out). Transport of potassium into the cell. Likely operates as a K(+):H(+) symporter. This chain is Probable potassium transport system protein Kup, found in Verminephrobacter eiseniae (strain EF01-2).